A 222-amino-acid chain; its full sequence is Pectate lyase A (222 aa).

The N-terminal stretch at 1–26 (MKKMLTLLLSAGLVASIFGVMPAAAA) is a signal peptide.

Belongs to the polysaccharide lyase 3 family. Ca(2+) serves as cofactor.

It localises to the secreted. The enzyme catalyses Eliminative cleavage of (1-&gt;4)-alpha-D-galacturonan to give oligosaccharides with 4-deoxy-alpha-D-galact-4-enuronosyl groups at their non-reducing ends.. The catalysed reaction is Eliminative cleavage of (1-&gt;4)-alpha-D-galacturonan methyl ester to give oligosaccharides with 4-deoxy-6-O-methyl-alpha-D-galact-4-enuronosyl groups at their non-reducing ends.. It participates in glycan metabolism; pectin degradation. Functionally, catalyzes the depolymerization of both polygalacturonate and pectins with low (20-34%) and high (90%) levels of methyl esterification, with an endo mode of action. In contrast to the majority of pectate lyases, displays high activity on highly methylated pectins. Does not show xylanase and cellulase activity. This chain is Pectate lyase A, found in Paenibacillus amylolyticus.